Reading from the N-terminus, the 161-residue chain is Phosphopantetheine adenylyltransferase (161 aa).

Position 9 (threonine 9) interacts with substrate. ATP is bound by residues 9 to 10 and histidine 17; that span reads TF. Residues lysine 41, leucine 73, and arginine 87 each coordinate substrate. Residues 88–90, glutamate 98, and 123–129 contribute to the ATP site; these read GMR and WSYVSST.

This sequence belongs to the bacterial CoaD family. Homohexamer. The cofactor is Mg(2+).

The protein resides in the cytoplasm. The enzyme catalyses (R)-4'-phosphopantetheine + ATP + H(+) = 3'-dephospho-CoA + diphosphate. It participates in cofactor biosynthesis; coenzyme A biosynthesis; CoA from (R)-pantothenate: step 4/5. Reversibly transfers an adenylyl group from ATP to 4'-phosphopantetheine, yielding dephospho-CoA (dPCoA) and pyrophosphate. This chain is Phosphopantetheine adenylyltransferase, found in Actinobacillus succinogenes (strain ATCC 55618 / DSM 22257 / CCUG 43843 / 130Z).